Consider the following 239-residue polypeptide: tRNA (guanine-N(1)-)-methyltransferase (239 aa).

S-adenosyl-L-methionine-binding positions include G112 and 131 to 136 (LGDFIL).

The protein belongs to the RNA methyltransferase TrmD family. As to quaternary structure, homodimer.

Its subcellular location is the cytoplasm. It catalyses the reaction guanosine(37) in tRNA + S-adenosyl-L-methionine = N(1)-methylguanosine(37) in tRNA + S-adenosyl-L-homocysteine + H(+). Its function is as follows. Specifically methylates guanosine-37 in various tRNAs. This Clostridium tetani (strain Massachusetts / E88) protein is tRNA (guanine-N(1)-)-methyltransferase.